Here is a 184-residue protein sequence, read N- to C-terminus: Cell wall protein phiA (184 aa).

Positions 1–21 (MQLKNLIFAAATAAALPATDA) are cleaved as a signal peptide. N-linked (GlcNAc...) asparagine glycosylation occurs at N58.

This sequence belongs to the phiA family.

The protein localises to the secreted. Its subcellular location is the cell wall. Its function is as follows. Cell wall protein involved in development of asexual structures such as phialide and conidium development, and thus required for spore formation. Plays a role as a general stress protectant produced by the fungus in competition with antagonistic bacteria. The sequence is that of Cell wall protein phiA from Aspergillus niger (strain ATCC MYA-4892 / CBS 513.88 / FGSC A1513).